We begin with the raw amino-acid sequence, 108 residues long: Succinate dehydrogenase assembly factor 4, mitochondrial (108 aa).

Residues methionine 1–alanine 20 constitute a mitochondrion transit peptide. The interval arginine 31–phenylalanine 108 is disordered. 2 stretches are compositionally biased toward basic and acidic residues: residues lysine 52–glycine 87 and arginine 95–phenylalanine 108.

This sequence belongs to the SDHAF4 family. In terms of assembly, interacts with SDHA in its FAD-bound form.

Its subcellular location is the mitochondrion matrix. Functionally, plays an essential role in the assembly of succinate dehydrogenase (SDH), an enzyme complex (also referred to as respiratory complex II) that is a component of both the tricarboxylic acid (TCA) cycle and the mitochondrial electron transport chain, and which couples the oxidation of succinate to fumarate with the reduction of ubiquinone (coenzyme Q) to ubiquinol. Binds to the flavoprotein subunit SDHA in its FAD-bound form, blocking the generation of excess reactive oxygen species (ROS) and facilitating its assembly with the iron-sulfur protein subunit SDHB into the SDH catalytic dimer. This chain is Succinate dehydrogenase assembly factor 4, mitochondrial, found in Homo sapiens (Human).